Here is an 823-residue protein sequence, read N- to C-terminus: Lon protease (823 aa).

The Lon N-terminal domain occupies 51 to 246 (IPILPLRNMV…RLLFILNREY (196 aa)). 397–404 (GPPGVGKT) is an ATP binding site. Residues 633–815 (NDYAGVVTGL…QQVVDLALLR (183 aa)) form the Lon proteolytic domain. Active-site residues include Ser721 and Lys764.

The protein belongs to the peptidase S16 family. In terms of assembly, homohexamer. Organized in a ring with a central cavity.

It localises to the cytoplasm. The enzyme catalyses Hydrolysis of proteins in presence of ATP.. Functionally, ATP-dependent serine protease that mediates the selective degradation of mutant and abnormal proteins as well as certain short-lived regulatory proteins. Required for cellular homeostasis and for survival from DNA damage and developmental changes induced by stress. Degrades polypeptides processively to yield small peptide fragments that are 5 to 10 amino acids long. Binds to DNA in a double-stranded, site-specific manner. This chain is Lon protease, found in Parabacteroides distasonis (strain ATCC 8503 / DSM 20701 / CIP 104284 / JCM 5825 / NCTC 11152).